Here is a 242-residue protein sequence, read N- to C-terminus: Probable transcriptional regulatory protein lhv_0777 (242 aa).

The segment at 1 to 22 (MSGHSKWHNIQGRKNAQDAKRG) is disordered.

The protein belongs to the TACO1 family.

The protein resides in the cytoplasm. The polypeptide is Probable transcriptional regulatory protein lhv_0777 (Lactobacillus helveticus (strain DPC 4571)).